We begin with the raw amino-acid sequence, 555 residues long: Formate--tetrahydrofolate ligase (555 aa).

T65–S72 serves as a coordination point for ATP.

The protein belongs to the formate--tetrahydrofolate ligase family.

The catalysed reaction is (6S)-5,6,7,8-tetrahydrofolate + formate + ATP = (6R)-10-formyltetrahydrofolate + ADP + phosphate. It functions in the pathway one-carbon metabolism; tetrahydrofolate interconversion. This is Formate--tetrahydrofolate ligase from Staphylococcus haemolyticus (strain JCSC1435).